Consider the following 222-residue polypeptide: Ornithine decarboxylase antizyme 1 (222 aa).

Belongs to the ODC antizyme family. Interacts with ODC1 and thereby sterically blocks ODC homodimerization. Forms a ternary complex with PSMB4 and OAZ1 before PSMB4 is incorporated into the 20S proteasome. Interacts with AZIN2; this interaction disrupts the interaction between the antizyme and ODC1. Interacts with FAM171A1.

Its function is as follows. Ornithine decarboxylase (ODC) antizyme protein that negatively regulates ODC activity and intracellular polyamine biosynthesis and uptake in response to increased intracellular polyamine levels. Binds to ODC monomers, inhibiting the assembly of the functional ODC homodimer, and targets the monomers for ubiquitin-independent proteolytic destruction by the 26S proteasome. Triggers ODC degradation by inducing the exposure of a cryptic proteasome-interacting surface of ODC. Stabilizes AZIN2 by interfering with its ubiquitination. Also inhibits cellular uptake of polyamines by inactivating the polyamine uptake transporter. SMAD1/OAZ1/PSMB4 complex mediates the degradation of the CREBBP/EP300 repressor SNIP1. Involved in the translocation of AZIN2 from ER-Golgi intermediate compartment (ERGIC) to the cytosol. The sequence is that of Ornithine decarboxylase antizyme 1 (OAZ1) from Mesocricetus auratus (Golden hamster).